Consider the following 100-residue polypeptide: Probable antitoxin MazE4 (100 aa).

The segment at 77 to 100 is disordered; that stretch reads PYESEAERSAARARRNARQQRSAQ.

Forms a complex with cognate toxin MazF4.

Functionally, antitoxin component of a type II toxin-antitoxin (TA) system. Labile antitoxin that binds to cognate MazF4 toxin and counteracts its endoribonuclease activity. This chain is Probable antitoxin MazE4 (mazE4), found in Mycobacterium tuberculosis (strain CDC 1551 / Oshkosh).